The following is a 466-amino-acid chain: ATP synthase subunit beta (466 aa).

155 to 162 (GGAGVGKT) lines the ATP pocket.

It belongs to the ATPase alpha/beta chains family. In terms of assembly, F-type ATPases have 2 components, CF(1) - the catalytic core - and CF(0) - the membrane proton channel. CF(1) has five subunits: alpha(3), beta(3), gamma(1), delta(1), epsilon(1). CF(0) has three main subunits: a(1), b(2) and c(9-12). The alpha and beta chains form an alternating ring which encloses part of the gamma chain. CF(1) is attached to CF(0) by a central stalk formed by the gamma and epsilon chains, while a peripheral stalk is formed by the delta and b chains.

The protein resides in the cell inner membrane. The enzyme catalyses ATP + H2O + 4 H(+)(in) = ADP + phosphate + 5 H(+)(out). Its function is as follows. Produces ATP from ADP in the presence of a proton gradient across the membrane. The catalytic sites are hosted primarily by the beta subunits. The sequence is that of ATP synthase subunit beta from Bordetella bronchiseptica (strain ATCC BAA-588 / NCTC 13252 / RB50) (Alcaligenes bronchisepticus).